We begin with the raw amino-acid sequence, 109 residues long: Staphostatin B (109 aa).

Positions 97-101 (IGTSR) are binds to staphopain B.

This sequence belongs to the protease inhibitor I57 (SspC) family. As to quaternary structure, forms a stable non-covalent complex with prematurely activated/folded SspB.

The protein resides in the cytoplasm. Specifically inhibits the cysteine protease staphopain B (SspB) by blocking the active site of the enzyme. Probably required to protect cytoplasmic proteins from being degraded by prematurely activated/folded prostaphopain B. Also involved in growth capacity, viability and bacterial morphology. The polypeptide is Staphostatin B (sspC) (Staphylococcus aureus (strain NCTC 8325 / PS 47)).